Consider the following 155-residue polypeptide: Ribonuclease H (155 aa).

The RNase H type-1 domain occupies 4–146 (NIDVVEIYTD…CDRLATEQIK (143 aa)). Mg(2+)-binding residues include Asp13, Glu51, Asp73, and Asp138.

The protein belongs to the RNase H family. As to quaternary structure, monomer. The cofactor is Mg(2+).

It is found in the cytoplasm. The catalysed reaction is Endonucleolytic cleavage to 5'-phosphomonoester.. Its function is as follows. Endonuclease that specifically degrades the RNA of RNA-DNA hybrids. The polypeptide is Ribonuclease H (Thermoanaerobacter pseudethanolicus (strain ATCC 33223 / 39E) (Clostridium thermohydrosulfuricum)).